A 299-amino-acid chain; its full sequence is ATP phosphoribosyltransferase (299 aa).

The protein belongs to the ATP phosphoribosyltransferase family. Long subfamily. As to quaternary structure, equilibrium between an active dimeric form, an inactive hexameric form and higher aggregates. Interconversion between the various forms is largely reversible and is influenced by the natural substrates and inhibitors of the enzyme. Mg(2+) is required as a cofactor.

The protein localises to the cytoplasm. It carries out the reaction 1-(5-phospho-beta-D-ribosyl)-ATP + diphosphate = 5-phospho-alpha-D-ribose 1-diphosphate + ATP. Its pathway is amino-acid biosynthesis; L-histidine biosynthesis; L-histidine from 5-phospho-alpha-D-ribose 1-diphosphate: step 1/9. Feedback inhibited by histidine. In terms of biological role, catalyzes the condensation of ATP and 5-phosphoribose 1-diphosphate to form N'-(5'-phosphoribosyl)-ATP (PR-ATP). Has a crucial role in the pathway because the rate of histidine biosynthesis seems to be controlled primarily by regulation of HisG enzymatic activity. In Blochmanniella pennsylvanica (strain BPEN), this protein is ATP phosphoribosyltransferase.